A 341-amino-acid chain; its full sequence is tRNA N6-adenosine threonylcarbamoyltransferase (341 aa).

Histidine 111 and histidine 115 together coordinate Fe cation. Substrate contacts are provided by residues 134–138, aspartate 167, glycine 180, and asparagine 276; that span reads LVSGG. Aspartate 304 is a binding site for Fe cation.

This sequence belongs to the KAE1 / TsaD family. The cofactor is Fe(2+).

It is found in the cytoplasm. The enzyme catalyses L-threonylcarbamoyladenylate + adenosine(37) in tRNA = N(6)-L-threonylcarbamoyladenosine(37) in tRNA + AMP + H(+). In terms of biological role, required for the formation of a threonylcarbamoyl group on adenosine at position 37 (t(6)A37) in tRNAs that read codons beginning with adenine. Is involved in the transfer of the threonylcarbamoyl moiety of threonylcarbamoyl-AMP (TC-AMP) to the N6 group of A37, together with TsaE and TsaB. TsaD likely plays a direct catalytic role in this reaction. This is tRNA N6-adenosine threonylcarbamoyltransferase from Pseudomonas fluorescens (strain SBW25).